A 617-amino-acid polypeptide reads, in one-letter code: Regulatory solute carrier protein family 1 member 1 (617 aa).

Over residues 1 to 22 (MSSLPTSDGFNHPARSSGQSPD) the composition is skewed to polar residues. Disordered regions lie at residues 1 to 106 (MSSL…EITV), 155 to 181 (ENQN…VAQQ), and 217 to 237 (KGNG…IPSS). Composition is skewed to basic and acidic residues over residues 43–52 (SDSDRIEPKA) and 66–83 (SEKK…HASS). 2 stretches are compositionally biased toward polar residues: residues 89–103 (TDQS…SSEE) and 155–165 (ENQNLSQVSDP). Residues 410-412 (QCP) form an involved in post-transcriptional down-regulation of SLC5A1 region. The region spanning 571 to 611 (IFPATDIDRILRAGFTLQEALGALHRVGGNADLALLVLLAK) is the UBA domain.

As to quaternary structure, interacts with YRDC. As to expression, expressed in small intestine, kidney and brain.

The protein resides in the cell membrane. The protein localises to the nucleus. Its subcellular location is the golgi apparatus. It is found in the trans-Golgi network. Mediates transcriptional and post-transcriptional regulation of SLC5A1. Inhibits a dynamin and PKC-dependent exocytotic pathway of SLC5A1. Also involved in transcriptional regulation of SLC22A2. Exhibits glucose-dependent, short-term inhibition of SLC5A1 and SLC22A2 by inhibiting the release of vesicles from the trans-Golgi network. In Homo sapiens (Human), this protein is Regulatory solute carrier protein family 1 member 1 (RSC1A1).